We begin with the raw amino-acid sequence, 283 residues long: Pantothenate synthetase (283 aa).

Residue 30 to 37 (MGYYHAGH) coordinates ATP. His-37 acts as the Proton donor in catalysis. Gln-61 is a (R)-pantoate binding site. Position 61 (Gln-61) interacts with beta-alanine. ATP is bound at residue 147–150 (GQKD). Gln-153 is a (R)-pantoate binding site. ATP contacts are provided by residues Val-176 and 184 to 187 (MSSR).

This sequence belongs to the pantothenate synthetase family. In terms of assembly, homodimer.

It localises to the cytoplasm. It catalyses the reaction (R)-pantoate + beta-alanine + ATP = (R)-pantothenate + AMP + diphosphate + H(+). Its pathway is cofactor biosynthesis; (R)-pantothenate biosynthesis; (R)-pantothenate from (R)-pantoate and beta-alanine: step 1/1. Its function is as follows. Catalyzes the condensation of pantoate with beta-alanine in an ATP-dependent reaction via a pantoyl-adenylate intermediate. This Nitratidesulfovibrio vulgaris (strain ATCC 29579 / DSM 644 / CCUG 34227 / NCIMB 8303 / VKM B-1760 / Hildenborough) (Desulfovibrio vulgaris) protein is Pantothenate synthetase.